A 100-amino-acid chain; its full sequence is Probable steroid-binding protein 3 (100 aa).

Methionine 1 carries the post-translational modification N-acetylmethionine. A Cytochrome b5 heme-binding domain is found at 1–82 (MEFTAEQLSQ…LTEKEINTLN (82 aa)). Positions 1-82 (MEFTAEQLSQ…LTEKEINTLN (82 aa)) are sterol-binding.

The protein belongs to the cytochrome b5 family. MAPR subfamily.

It is found in the nucleus. The sequence is that of Probable steroid-binding protein 3 (MP3) from Arabidopsis thaliana (Mouse-ear cress).